A 757-amino-acid chain; its full sequence is Cellulose synthase-like protein B1 (757 aa).

2 consecutive transmembrane segments (helical) span residues 18–38 (TNYF…SLLL) and 50–70 (VWLV…LITC). The active site involves aspartate 136. Positions 186-216 (EFNRDWEKTKREYEKLRRKVEDATGDSHMLD) form a coiled coil. The active site involves aspartate 462. The next 6 membrane-spanning stretches (helical) occupy residues 533 to 553 (LAYL…YCLL), 569 to 589 (LYLG…LWEF), 615 to 635 (LFSI…VFII), 674 to 694 (FLPG…FSVG), 710 to 730 (AEAC…MGLF), and 737 to 757 (TPLS…VFSV).

Belongs to the glycosyltransferase 2 family. Plant cellulose synthase-like B subfamily. Expressed in young seedlings, primarily in the vascular tissue.

Its subcellular location is the golgi apparatus membrane. In terms of biological role, thought to be a Golgi-localized beta-glycan synthase that polymerize the backbones of noncellulosic polysaccharides (hemicelluloses) of plant cell wall. The chain is Cellulose synthase-like protein B1 (CSLB1) from Arabidopsis thaliana (Mouse-ear cress).